Consider the following 207-residue polypeptide: Outer-membrane lipoprotein LolB (207 aa).

The signal sequence occupies residues 1–21 (MPMRKRHFYRLLPLASLLLAA). The N-palmitoyl cysteine moiety is linked to residue C22. C22 carries S-diacylglycerol cysteine lipidation.

Belongs to the LolB family. In terms of assembly, monomer.

The protein resides in the cell outer membrane. Functionally, plays a critical role in the incorporation of lipoproteins in the outer membrane after they are released by the LolA protein. This is Outer-membrane lipoprotein LolB from Yersinia pseudotuberculosis serotype O:1b (strain IP 31758).